The chain runs to 126 residues: Fatty acid-binding protein, liver (126 aa).

A2 is modified (N-acetylalanine). Positions 77, 99, and 101 each coordinate cholate.

This sequence belongs to the calycin superfamily. Fatty-acid binding protein (FABP) family.

The protein localises to the cytoplasm. In terms of biological role, binds free fatty acids and their coenzyme A derivatives, bilirubin, and some other small molecules in the cytoplasm. May be involved in intracellular lipid transport. The polypeptide is Fatty acid-binding protein, liver (fabp1) (Aquarana catesbeiana (American bullfrog)).